The chain runs to 172 residues: MPRFQKNDNFIDKTFTVLADLVLKILPATKQEKEAFSYYRDGMSAQSEGEYAEALENYYEALRLEEDPYDRSYILYNIGLIYASNGEYVKALEYYHQALDLNSQLPAALNNIAVIYHYQGVKASEKKELDLARTLFDKAAEYWKQAIRLSPNNYIEAQNWLKTTGRSDTLTI.

TPR repeat units follow at residues 35–68 (AFSY…EEDP), 72–105 (SYIL…NSQL), and 120–153 (GVKA…SPNN).

It belongs to the Ycf3 family.

It localises to the plastid. The protein localises to the chloroplast thylakoid membrane. Functionally, essential for the assembly of the photosystem I (PSI) complex. May act as a chaperone-like factor to guide the assembly of the PSI subunits. This Guillardia theta (Cryptophyte) protein is Photosystem I assembly protein Ycf3.